A 443-amino-acid polypeptide reads, in one-letter code: Glucose-6-phosphate isomerase (443 aa).

Glu285 (proton donor) is an active-site residue. Active-site residues include His306 and Lys420.

It belongs to the GPI family.

The protein localises to the cytoplasm. It carries out the reaction alpha-D-glucose 6-phosphate = beta-D-fructose 6-phosphate. The protein operates within carbohydrate biosynthesis; gluconeogenesis. It participates in carbohydrate degradation; glycolysis; D-glyceraldehyde 3-phosphate and glycerone phosphate from D-glucose: step 2/4. Its function is as follows. Catalyzes the reversible isomerization of glucose-6-phosphate to fructose-6-phosphate. This Staphylococcus aureus (strain USA300) protein is Glucose-6-phosphate isomerase.